A 363-amino-acid polypeptide reads, in one-letter code: Cobalt-precorrin-5B C(1)-methyltransferase (363 aa).

This sequence belongs to the CbiD family.

It catalyses the reaction Co-precorrin-5B + S-adenosyl-L-methionine = Co-precorrin-6A + S-adenosyl-L-homocysteine. It participates in cofactor biosynthesis; adenosylcobalamin biosynthesis; cob(II)yrinate a,c-diamide from sirohydrochlorin (anaerobic route): step 6/10. Functionally, catalyzes the methylation of C-1 in cobalt-precorrin-5B to form cobalt-precorrin-6A. The polypeptide is Cobalt-precorrin-5B C(1)-methyltransferase (Burkholderia pseudomallei (strain K96243)).